The chain runs to 428 residues: Histidinol dehydrogenase (428 aa).

NAD(+) contacts are provided by Tyr-127, Gln-189, and Asn-212. The substrate site is built by Ser-235, Gln-257, and His-260. The Zn(2+) site is built by Gln-257 and His-260. Residues Glu-325 and His-326 each act as proton acceptor in the active site. The substrate site is built by His-326, Asp-359, Glu-413, and His-418. Residue Asp-359 coordinates Zn(2+). Residue His-418 participates in Zn(2+) binding.

This sequence belongs to the histidinol dehydrogenase family. It depends on Zn(2+) as a cofactor.

It catalyses the reaction L-histidinol + 2 NAD(+) + H2O = L-histidine + 2 NADH + 3 H(+). It participates in amino-acid biosynthesis; L-histidine biosynthesis; L-histidine from 5-phospho-alpha-D-ribose 1-diphosphate: step 9/9. Catalyzes the sequential NAD-dependent oxidations of L-histidinol to L-histidinaldehyde and then to L-histidine. This Prochlorococcus marinus subsp. pastoris (strain CCMP1986 / NIES-2087 / MED4) protein is Histidinol dehydrogenase.